The primary structure comprises 215 residues: 3,4-dihydroxy-2-butanone 4-phosphate synthase (215 aa).

Residues 38–39, aspartate 43, 151–155, and glutamate 175 contribute to the D-ribulose 5-phosphate site; these read RE and RRGHT. Mg(2+) is bound at residue glutamate 39. Mg(2+) is bound at residue histidine 154.

The protein belongs to the DHBP synthase family. Homodimer. Mg(2+) is required as a cofactor. The cofactor is Mn(2+).

It carries out the reaction D-ribulose 5-phosphate = (2S)-2-hydroxy-3-oxobutyl phosphate + formate + H(+). Its pathway is cofactor biosynthesis; riboflavin biosynthesis; 2-hydroxy-3-oxobutyl phosphate from D-ribulose 5-phosphate: step 1/1. Catalyzes the conversion of D-ribulose 5-phosphate to formate and 3,4-dihydroxy-2-butanone 4-phosphate. The polypeptide is 3,4-dihydroxy-2-butanone 4-phosphate synthase (Haemophilus influenzae (strain ATCC 51907 / DSM 11121 / KW20 / Rd)).